The primary structure comprises 239 residues: SKA complex subunit 1 (239 aa).

Residues 87–115 form a disordered region; that stretch reads PDSVPQKSTRPCLDDEKEGSSVVQPPESG. The segment at 116–239 is microtubule binding; sequence NRHVQLISEQ…RCGPLTFYYA (124 aa).

It belongs to the SKA1 family. In terms of assembly, component of the SKA complex, composed of two copies of ska-1 and a single copy of ska-3. The core complex associates with microtubules and may form dimeric assemblies. Interacts with ska-3 and microtubules.

Its subcellular location is the cytoplasm. The protein localises to the cytoskeleton. It localises to the spindle. It is found in the chromosome. The protein resides in the centromere. Its subcellular location is the kinetochore. In terms of biological role, component of the SKA complex, a microtubule plus end-binding complex of the outer kinetochore that stabilizes spindle microtubule-kinetochore attachments, promotes alignment of chromosomes at the mitotic spindle equator (chromosome congression) and assists suppression of the spindle assembly checkpoint. Kinetochores, consisting of a centromere-associated inner segment and a microtubule-contacting outer segment, play a crucial role in chromosome segregation by mediating the physical connection between centromeric DNA and spindle microtubules. The outer kinetochore is made up of the ten-subunit KMN network complex, comprising the MIS12, NDC80 and KNL1 complexes, and auxiliary microtubule-associated components such as the SKA complex; together they connect the outer kinetochore with the inner kinetochore, bind microtubules, and mediate interactions with mitotic checkpoint proteins that delay anaphase until chromosomes are bioriented on the spindle. The SKA complex is loaded onto bioriented kinetochores and it facilitates chromosome congression by stabilizing microtubules and end-on attachment of the NDC80 complex to depolymerizing spindle microtubules, thereby assisting the poleward-moving kinetochore in withstanding microtubule pulling forces. The complex associates with dynamic microtubule plus-ends and can track both depolymerizing and elongating microtubules. The complex recruits protein phosphatase 1 (PP1) to the kinetochore in prometaphase and metaphase, to oppose spindle assembly checkpoint signaling and promote the onset of anaphase. In the complex, it mediates interactions with microtubules. During meiosis the SKA complex stabilizes the meiotic spindle and is required for its migration to the cortex. The protein is SKA complex subunit 1 of Caenorhabditis briggsae.